A 636-amino-acid polypeptide reads, in one-letter code: ATP-dependent DNA helicase YoaA (636 aa).

Residues 10-272 (QLAKAIPGFK…KDTQQLQKCA (263 aa)) form the Helicase ATP-binding domain. 45 to 52 (AGTGTGKT) contributes to the ATP binding site. [4Fe-4S] cluster-binding residues include C108, C168, C173, and C179. A DEAH box motif is present at residues 225–228 (DEAH).

The protein belongs to the helicase family. DinG subfamily. As to quaternary structure, interacts with the DNA polymerase III subunit Chi (holC), probably as a 1:1 complex. [4Fe-4S] cluster serves as cofactor. The cofactor is Mg(2+).

It catalyses the reaction Couples ATP hydrolysis with the unwinding of duplex DNA at the replication fork by translocating in the 5'-3' direction. This creates two antiparallel DNA single strands (ssDNA). The leading ssDNA polymer is the template for DNA polymerase III holoenzyme which synthesizes a continuous strand.. The enzyme catalyses ATP + H2O = ADP + phosphate + H(+). Its activity is regulated as follows. Non-hydrolyzable ATP analogs ATP-gamma-S and adenylyl-imidodiphosphate (AMP-PNP) inhibit helicase activity. DNA-dependent ATPase and 5'-3' DNA helicase. Has single-stranded (ss)DNA-dependent ATPase activity and 5'-3' helicase activity on forked DNA; both activities were measure in a YoaA:HolC (chi) complex. Requires a 20-35 nucleotide (nt) 5'-ssDNA tail; dsDNA with a 20 nt gap is also unwound. Unwinds damaged 3' nascent ends (such as those terminated by 3' azidothymidine (AZT), 3' dideoxy-C or an abasic site on the translocating strand), to promote repair and AZT excision. Without HolC the protein has much lower activity which could be due to YoaA instability or helicase stimulation by HolC. Genetically identified as involved in the repair of replication forks and tolerance of the chain-terminating nucleoside analog AZT. May act in proofreading during nucleotide misincorporation, it appears to aid in the removal of potential A-to-T transversion mutations in ndk mutants. This is ATP-dependent DNA helicase YoaA (yoaA) from Escherichia coli (strain K12).